Reading from the N-terminus, the 300-residue chain is Fatty acid hydroxylase uhd1 (300 aa).

NADP(+) contacts are provided by residues 14–20, R39, 63–64, 83–85, Y156, K160, 183–186, and S199; these read GANGFVG, DL, VAS, and PVYI. K160 serves as the catalytic Proton donor.

Belongs to the NAD(P)-dependent epimerase/dehydratase family. Dihydroflavonol-4-reductase subfamily.

It participates in secondary metabolite biosynthesis. In terms of biological role, fatty acid hydroxylase; part of the gene cluster that mediates the biosynthesis of the glycolipid biosurfactant ustilagic acid (UA). UA is a secreted cellobiose glycolipid that is toxic for many microorganisms and confers biocontrol activity to U.maydis. UA consists of 15,16-dihydroxypalmitic or 2,15,16-trihydroxypalmitic acid, which is O-glycosidically linked to cellobiose at its terminal hydroxyl group. In addition, the cellobiose moiety is acetylated and acylated with a short-chain hydroxy fatty acid. UA biosynthesis starts with omega-hydroxylation of palmitic acid catalyzed by the cytochrome P450 monooxygenase cyp1. Terminal hydroxylation of palmitic acid precedes subterminal hydroxylation catalyzed by the cytochrome P450 monooxygenase cyp2. Sequential glucosylation of the hydroxy fatty acid is probably catalyzed by the glycosyltransferase ugt1. The cellobiose lipid is further decorated by acetylation of the proximal glucose residue and by acylation with a short-chain beta-hydroxy fatty acid at the distal glucose residue. The acyltransferase uat1 may be a good candidate for catalyzing either acetylation or acylation of the cellobiose lipid. The fatty acid synthase fas2 may be involved in synthesis of the carbon backbone of the short-chain beta-hydroxy fatty acid esterified to the cellobiose disaccharide. The secreted UA consists of a mixture of both alpha-hydroxylated and non-hydroxylated glycolipids; therefore, alpha-hydroxylation of the long-chain fatty, catalyzed by the fatty acid hydroxylase ahd1, occurs late in UA biosynthesis and may be the last step before secretion. In Mycosarcoma maydis (Corn smut fungus), this protein is Fatty acid hydroxylase uhd1.